The chain runs to 247 residues: Probable transcriptional regulatory protein YPK_2146 (247 aa).

This sequence belongs to the TACO1 family.

The protein localises to the cytoplasm. The sequence is that of Probable transcriptional regulatory protein YPK_2146 from Yersinia pseudotuberculosis serotype O:3 (strain YPIII).